A 195-amino-acid chain; its full sequence is Phosphoheptose isomerase (195 aa).

Positions 35-195 constitute an SIS domain; it reads IVSKILQAGN…IVEYNLFKME (161 aa). 51–53 lines the substrate pocket; that stretch reads NGG. Histidine 60 and glutamate 64 together coordinate Zn(2+). Substrate contacts are provided by residues glutamate 64, 95 to 96, 121 to 123, serine 126, and glutamine 173; these read ND and STS. Glutamine 173 and histidine 181 together coordinate Zn(2+).

This sequence belongs to the SIS family. GmhA subfamily. Requires Zn(2+) as cofactor.

The protein localises to the cytoplasm. The catalysed reaction is 2 D-sedoheptulose 7-phosphate = D-glycero-alpha-D-manno-heptose 7-phosphate + D-glycero-beta-D-manno-heptose 7-phosphate. It functions in the pathway carbohydrate biosynthesis; D-glycero-D-manno-heptose 7-phosphate biosynthesis; D-glycero-alpha-D-manno-heptose 7-phosphate and D-glycero-beta-D-manno-heptose 7-phosphate from sedoheptulose 7-phosphate: step 1/1. In terms of biological role, catalyzes the isomerization of sedoheptulose 7-phosphate in D-glycero-D-manno-heptose 7-phosphate. This Leptospira interrogans serogroup Icterohaemorrhagiae serovar copenhageni (strain Fiocruz L1-130) protein is Phosphoheptose isomerase.